Here is a 155-residue protein sequence, read N- to C-terminus: Small ribosomal subunit protein uS7c (155 aa).

This sequence belongs to the universal ribosomal protein uS7 family. In terms of assembly, part of the 30S ribosomal subunit.

It localises to the plastid. It is found in the chloroplast. Its function is as follows. One of the primary rRNA binding proteins, it binds directly to 16S rRNA where it nucleates assembly of the head domain of the 30S subunit. The chain is Small ribosomal subunit protein uS7c (rps7) from Coelogyne cristata (Orchid).